The primary structure comprises 106 residues: Malonate decarboxylase acyl carrier protein (106 aa).

O-(phosphoribosyl dephospho-coenzyme A)serine is present on Ser28.

Belongs to the MdcC family. In terms of processing, covalently binds the prosthetic group of malonate decarboxylase.

It is found in the cytoplasm. In terms of biological role, subunit of malonate decarboxylase, it is an acyl carrier protein to which acetyl and malonyl thioester residues are bound via a 2'-(5''-phosphoribosyl)-3'-dephospho-CoA prosthetic group and turn over during the catalytic mechanism. The protein is Malonate decarboxylase acyl carrier protein of Stenotrophomonas maltophilia (strain R551-3).